Here is a 449-residue protein sequence, read N- to C-terminus: UDP-N-acetylmuramoylalanine--D-glutamate ligase (449 aa).

Residue 118 to 124 (GTNGKTT) participates in ATP binding.

It belongs to the MurCDEF family.

The protein localises to the cytoplasm. It catalyses the reaction UDP-N-acetyl-alpha-D-muramoyl-L-alanine + D-glutamate + ATP = UDP-N-acetyl-alpha-D-muramoyl-L-alanyl-D-glutamate + ADP + phosphate + H(+). It participates in cell wall biogenesis; peptidoglycan biosynthesis. Its function is as follows. Cell wall formation. Catalyzes the addition of glutamate to the nucleotide precursor UDP-N-acetylmuramoyl-L-alanine (UMA). The protein is UDP-N-acetylmuramoylalanine--D-glutamate ligase of Staphylococcus saprophyticus subsp. saprophyticus (strain ATCC 15305 / DSM 20229 / NCIMB 8711 / NCTC 7292 / S-41).